The following is a 207-amino-acid chain: Large ribosomal subunit protein uL4 (207 aa).

The interval 48–89 (SHKVKNRSEVRGGGRKPWRQKGTGRARQGSIRSPQWRGGGVV) is disordered. Over residues 60-71 (GGRKPWRQKGTG) the composition is skewed to basic residues.

This sequence belongs to the universal ribosomal protein uL4 family. As to quaternary structure, part of the 50S ribosomal subunit.

In terms of biological role, one of the primary rRNA binding proteins, this protein initially binds near the 5'-end of the 23S rRNA. It is important during the early stages of 50S assembly. It makes multiple contacts with different domains of the 23S rRNA in the assembled 50S subunit and ribosome. Its function is as follows. Forms part of the polypeptide exit tunnel. This chain is Large ribosomal subunit protein uL4, found in Bacillus velezensis (strain DSM 23117 / BGSC 10A6 / LMG 26770 / FZB42) (Bacillus amyloliquefaciens subsp. plantarum).